The sequence spans 120 residues: Jacalin-related lectin 39 (120 aa).

The Jacalin-type lectin domain occupies Ser6–Asn120.

This sequence belongs to the jacalin lectin family.

The chain is Jacalin-related lectin 39 (JAL39) from Arabidopsis thaliana (Mouse-ear cress).